The chain runs to 407 residues: Protein S-acyltransferase 8 (407 aa).

2 consecutive transmembrane segments (helical) span residues 29-49 (SLPL…VFVA) and 62-82 (GYAI…LLFF). In terms of domain architecture, DHHC spans 136–186 (KYCDTCMLYRPPRCSHCSICNNCVERFDHHCPWVGQCIGLRNYRYFFMFVS). Cysteine 166 serves as the catalytic S-palmitoyl cysteine intermediate. 2 helical membrane passes run 181–201 (FFMF…MSAV) and 224–244 (AVVL…LTAF). The segment at 348-368 (AEDANNNQPHHTLDIDHERAG) is disordered. Residues 358–368 (HTLDIDHERAG) show a composition bias toward basic and acidic residues. At serine 385 the chain carries Phosphoserine.

This sequence belongs to the DHHC palmitoyltransferase family. As to expression, expressed in flowers and pollen.

It is found in the cell membrane. It carries out the reaction L-cysteinyl-[protein] + hexadecanoyl-CoA = S-hexadecanoyl-L-cysteinyl-[protein] + CoA. In terms of biological role, S-acyltransferase involved in protein lipid modification. In Arabidopsis thaliana (Mouse-ear cress), this protein is Protein S-acyltransferase 8 (PAT08).